A 354-amino-acid chain; its full sequence is Uroporphyrinogen decarboxylase (354 aa).

Residues 30-34 (RQAGR), Asp-79, Tyr-154, Ser-209, and His-333 each bind substrate.

The protein belongs to the uroporphyrinogen decarboxylase family. As to quaternary structure, homodimer.

The protein localises to the cytoplasm. The catalysed reaction is uroporphyrinogen III + 4 H(+) = coproporphyrinogen III + 4 CO2. The protein operates within porphyrin-containing compound metabolism; protoporphyrin-IX biosynthesis; coproporphyrinogen-III from 5-aminolevulinate: step 4/4. In terms of biological role, catalyzes the decarboxylation of four acetate groups of uroporphyrinogen-III to yield coproporphyrinogen-III. In Mycolicibacterium gilvum (strain PYR-GCK) (Mycobacterium gilvum (strain PYR-GCK)), this protein is Uroporphyrinogen decarboxylase.